The sequence spans 345 residues: Peptidoglycan-recognition protein LE (345 aa).

The segment covering 1–16 (MSESGIKKLSQERTRE) has biased composition (basic and acidic residues). Residues 1–38 (MSESGIKKLSQERTREWLASQEDEELESIAESSVVDSL) are disordered. N-linked (GlcNAc...) asparagine glycans are attached at residues Asn-52, Asn-95, Asn-98, and Asn-106. The tract at residues 124–152 (NRRDRRHVSPPRDNAPKTPTHFEDDYQDE) is disordered. In terms of domain architecture, N-acetylmuramoyl-L-alanine amidase spans 198–324 (PVKYVVILHT…CQCNSTESPG (127 aa)). Residues His-206, 229–240 (HIESRGWNDIAY), Arg-254, 261–267 (AHTLGYN), and 314–322 (HCQCNSTES) contribute to the peptidoglycan site. Asn-318 carries an N-linked (GlcNAc...) asparagine glycan.

The protein belongs to the N-acetylmuramoyl-L-alanine amidase 2 family. In terms of assembly, monomer. Peptidoglycan binding induces oligomerization. Expressed in hemolymph. Localizes at the lumenal surface of the trachea (at protein level).

It localises to the secreted. Functionally, peptidoglycan-recognition protein that plays a key role in innate immunity by binding to murein peptidoglycans (PGN) of Gram-negative bacteria and activating the imd/Relish pathway. Has no activity against on Gram-positive bacteria. Binds to diaminopimelic acid-type PGN (DAP-type PGN), an activator of the imd/Relish pathway. Functions synergistically with PGRP-LC in producing resistance to E.coli and B.megaterium infections, which have the DAP-type peptidoglycan. Acts both upstream and in parallel with PGRP-LC in the imd/Relish pathway, and is required for infection-dependent activation of melanization. Required for Relish processing and nuclear translocation following proteolytic cleavage. Its localization suggests a role in the recognition and subsequent activation of the signaling at the first point of contact with invading bacteria. This Drosophila melanogaster (Fruit fly) protein is Peptidoglycan-recognition protein LE (PGRP-LE).